The sequence spans 416 residues: Lysosome-associated membrane glycoprotein 3 (416 aa).

Residues 1–27 form the signal peptide; it reads MPRQLSAAAVLFASLAVILHDGSQMRA. Over 28 to 381 the chain is Lumenal; that stretch reads KAFPKTRDYS…NVDECSSDYT (354 aa). The interval 135–217 is disordered; it reads PPTITPPAHT…ASTVPGSTLA (83 aa). A compositionally biased stretch (polar residues) spans 142–170; that stretch reads AHTTGTSSSTVNHTTGNATQPSNQTTLPA. The span at 188-208 shows a compositional bias: low complexity; that stretch reads PTHAPGTTAAAHNTTRTAAPA. A glycan (N-linked (GlcNAc...) asparagine) is linked at Asn-200. Cys-237 and Cys-274 are disulfide-bonded. An N-linked (GlcNAc...) asparagine glycan is attached at Asn-291. Cys-339 and Cys-376 are oxidised to a cystine. Residues 382–402 traverse the membrane as a helical segment; sequence IVLPVIGAIVVGLCLVGMGVY. Residues 403-416 lie on the Cytoplasmic side of the membrane; sequence KIRLRCQSSGYQRI.

It belongs to the LAMP family. As to quaternary structure, monomer. Interacts with FURIN.

It localises to the cell surface. Its subcellular location is the lysosome membrane. It is found in the cytoplasmic vesicle membrane. The protein resides in the early endosome membrane. Lysosomal membrane glycoprotein which plays a role in the unfolded protein response (UPR) that contributes to protein degradation and cell survival during proteasomal dysfunction. Plays a role in the process of fusion of the lysosome with the autophagosome, thereby modulating the autophagic process. Promotes hepatocellular lipogenesis through activation of the PI3K/Akt pathway. May also play a role in dendritic cell function and in adaptive immunity. This Macaca mulatta (Rhesus macaque) protein is Lysosome-associated membrane glycoprotein 3 (LAMP3).